Here is a 310-residue protein sequence, read N- to C-terminus: MRIVFAGTPEFAAEHLKALLDSPYEIVAVYTQPDRPAGRGQKLMPSAVKALAVAHDIPVFQPQTLRNADAQAELAALKPDLMVVVAYGLILPQVVLDIPRLGCINSHASLLPRWRGAAPIQRAVEAGDAESGVTVMRMEAGLDTGPMLLKVVTPISAEDTGGTLHDRLAEMGPPAVVQAIAGLADGSLQGEIQDDALATYAHKLNKDEARIDWTHPAVELERLIRAFNPWPVCHSTLDGESVKVLAANLSTGQGAPGEILSASKDGLVVACGDQALSLTRLQLPGGKALSFSDLFNSRREKFAAGKVLGQ.

109–112 (SLLP) contacts (6S)-5,6,7,8-tetrahydrofolate.

This sequence belongs to the Fmt family.

The enzyme catalyses L-methionyl-tRNA(fMet) + (6R)-10-formyltetrahydrofolate = N-formyl-L-methionyl-tRNA(fMet) + (6S)-5,6,7,8-tetrahydrofolate + H(+). Attaches a formyl group to the free amino group of methionyl-tRNA(fMet). The formyl group appears to play a dual role in the initiator identity of N-formylmethionyl-tRNA by promoting its recognition by IF2 and preventing the misappropriation of this tRNA by the elongation apparatus. In Pseudomonas putida (strain ATCC 47054 / DSM 6125 / CFBP 8728 / NCIMB 11950 / KT2440), this protein is Methionyl-tRNA formyltransferase.